A 252-amino-acid chain; its full sequence is Probable transcriptional regulatory protein THA_1246 (252 aa).

The protein belongs to the TACO1 family.

It is found in the cytoplasm. This is Probable transcriptional regulatory protein THA_1246 from Thermosipho africanus (strain TCF52B).